The following is a 516-amino-acid chain: Importin subunit alpha-B (516 aa).

A compositionally biased stretch (basic and acidic residues) spans 1-29; it reads MQRSKQETRKSQYKKSIDSDESRRKREEA. The interval 1–54 is disordered; the sequence is MQRSKQETRKSQYKKSIDSDESRRKREEASLSIRKNKREESLLKKRTQAVPGST. An IBB domain is found at 1–55; sequence MQRSKQETRKSQYKKSIDSDESRRKREEASLSIRKNKREESLLKKRTQAVPGSTP. ARM repeat units lie at residues 55 to 96, 100 to 140, 143 to 182, 185 to 227, 229 to 268, 271 to 310, 313 to 352, 355 to 394, and 398 to 437; these read PVKV…KLLS, SPPI…NIAS, PEQT…NIAG, HYCR…NFCR, KPQP…YLSD, NERI…NIVT, DNQT…NITA, KNQI…NATS, and PQQI…NILV. A disordered region spans residues 490–516; sequence EQEDEGDLMPEGSSFSFSNQTNSNFNL. The segment covering 502-516 has biased composition (low complexity); it reads SSFSFSNQTNSNFNL.

Belongs to the importin alpha family. In terms of assembly, forms a complex with tnpo/importin subunit beta.

It localises to the cytoplasm. The protein resides in the nucleus envelope. Functions in nuclear protein import via a substrate-importin alpha-beta transport complex that passes though the nuclear pore complexes (NPC). Binds specifically and directly to substrates containing either a simple or bipartite NLS motif. In Dictyostelium discoideum (Social amoeba), this protein is Importin subunit alpha-B.